A 283-amino-acid polypeptide reads, in one-letter code: Urease accessory protein UreD (283 aa).

The interval 1-21 (MTQTQPVGTLRLTIDDQGPQG) is disordered.

The protein belongs to the UreD family. As to quaternary structure, ureD, UreF and UreG form a complex that acts as a GTP-hydrolysis-dependent molecular chaperone, activating the urease apoprotein by helping to assemble the nickel containing metallocenter of UreC. The UreE protein probably delivers the nickel.

It is found in the cytoplasm. Probably acts in the maturation of urease via the functional incorporation of the urease nickel metallocenter. Required for urease expression. The chain is Urease accessory protein UreD from Corynebacterium glutamicum (strain ATCC 13032 / DSM 20300 / JCM 1318 / BCRC 11384 / CCUG 27702 / LMG 3730 / NBRC 12168 / NCIMB 10025 / NRRL B-2784 / 534).